The sequence spans 173 residues: Mediator of RNA polymerase II transcription subunit 10 (173 aa).

Residues 1-20 are compositionally biased toward polar residues; sequence MDPNSPMFQNTPQQPMSLQR. Positions 1–45 are disordered; that stretch reads MDPNSPMFQNTPQQPMSLQRSVDDRIDRERTAKKEKDDEKKKQED. The span at 21–45 shows a compositional bias: basic and acidic residues; it reads SVDDRIDRERTAKKEKDDEKKKQED.

It belongs to the Mediator complex subunit 10 family. As to quaternary structure, component of the Mediator complex.

The protein localises to the nucleus. Its function is as follows. Component of the Mediator complex, a coactivator involved in the regulated transcription of nearly all RNA polymerase II-dependent genes. Mediator functions as a bridge to convey information from gene-specific regulatory proteins to the basal RNA polymerase II transcription machinery. Mediator is recruited to promoters by direct interactions with regulatory proteins and serves as a scaffold for the assembly of a functional preinitiation complex with RNA polymerase II and the general transcription factors. This chain is Mediator of RNA polymerase II transcription subunit 10 (mdt-10), found in Caenorhabditis briggsae.